The sequence spans 160 residues: Cyclic pyranopterin monophosphate synthase (160 aa).

Substrate-binding positions include 76–78 and 114–115; these read LCH and ME. Asp-129 is an active-site residue.

It belongs to the MoaC family. In terms of assembly, homohexamer; trimer of dimers.

It carries out the reaction (8S)-3',8-cyclo-7,8-dihydroguanosine 5'-triphosphate = cyclic pyranopterin phosphate + diphosphate. It functions in the pathway cofactor biosynthesis; molybdopterin biosynthesis. In terms of biological role, catalyzes the conversion of (8S)-3',8-cyclo-7,8-dihydroguanosine 5'-triphosphate to cyclic pyranopterin monophosphate (cPMP). This is Cyclic pyranopterin monophosphate synthase from Vibrio cholerae serotype O1 (strain ATCC 39541 / Classical Ogawa 395 / O395).